Consider the following 231-residue polypeptide: NADH-ubiquinone oxidoreductase chain 4 (231 aa).

Helical transmembrane passes span 1-21 (PIAG…YGII), 34-54 (MFLP…LTCL), 61-80 (SLIA…AIII), 85-107 (GLAG…FCLA), 128-148 (ILPM…AIPP), and 169-189 (TIIL…HMFL).

It belongs to the complex I subunit 4 family.

It localises to the mitochondrion membrane. It catalyses the reaction a ubiquinone + NADH + 5 H(+)(in) = a ubiquinol + NAD(+) + 4 H(+)(out). In terms of biological role, core subunit of the mitochondrial membrane respiratory chain NADH dehydrogenase (Complex I) that is believed to belong to the minimal assembly required for catalysis. Complex I functions in the transfer of electrons from NADH to the respiratory chain. The immediate electron acceptor for the enzyme is believed to be ubiquinone. The protein is NADH-ubiquinone oxidoreductase chain 4 (MT-ND4) of Gloydius blomhoffii (Mamushi).